The chain runs to 391 residues: Elongation factor Tu (391 aa).

Positions Lys-10–Glu-201 constitute a tr-type G domain. The interval Gly-19–Thr-26 is G1. Gly-19–Thr-26 is a GTP binding site. Position 26 (Thr-26) interacts with Mg(2+). Residues Gly-55–Ser-59 are G2. The segment at Asp-76–Gly-79 is G3. GTP-binding positions include Asp-76 to His-80 and Asn-131 to Asp-134. A G4 region spans residues Asn-131 to Asp-134. A G5 region spans residues Ser-169–Leu-171.

This sequence belongs to the TRAFAC class translation factor GTPase superfamily. Classic translation factor GTPase family. EF-Tu/EF-1A subfamily. As to quaternary structure, monomer.

Its subcellular location is the cytoplasm. The enzyme catalyses GTP + H2O = GDP + phosphate + H(+). Its function is as follows. GTP hydrolase that promotes the GTP-dependent binding of aminoacyl-tRNA to the A-site of ribosomes during protein biosynthesis. The protein is Elongation factor Tu of Brucella anthropi (strain ATCC 49188 / DSM 6882 / CCUG 24695 / JCM 21032 / LMG 3331 / NBRC 15819 / NCTC 12168 / Alc 37) (Ochrobactrum anthropi).